A 3149-amino-acid chain; its full sequence is Large tegument protein deneddylase (3149 aa).

Positions 1–13 (MSNGDWGQSQRTR) are enriched in polar residues. The tract at residues 1-30 (MSNGDWGQSQRTRGTGPVRGIRTMDVNAPG) is disordered. The tract at residues 1 to 268 (MSNGDWGQSQ…YEANGSGFDL (268 aa)) is deubiquitination activity. The region spanning 41–258 (LGTASCNQAH…MLEHYGVYDF (218 aa)) is the Peptidase C76 domain. Active-site residues include C61, D193, and H195. The disordered stretch occupies residues 319-341 (PAARYSPAKTNSPPSSPASAAPA). 8 repeat units span residues 335–339 (PASAA), 340–344 (PASAA), 345–349 (PASAA), 350–354 (PASAA), 355–359 (PASAA), 360–364 (PASAA), 365–369 (PASAA), and 370–374 (PASAA). The segment at 335 to 374 (PASAAPASAAPASAAPASAAPASAAPASAAPASAAPASAA) is 8 X 5 AA repeats of P-A-S-A-A. Disordered regions lie at residues 382 to 656 (FIPI…GSGL), 901 to 923 (LLSG…SIYR), 1143 to 1166 (APIS…TPPL), 1412 to 1434 (GRKE…RARE), 1644 to 1677 (PEAT…SALW), 2583 to 2839 (GLVS…PTAV), 2852 to 2981 (AAAS…PGAR), and 2995 to 3019 (QTYT…KCKD). The segment covering 462-483 (LPPPVIPIPHQSPPASPTPHPA) has biased composition (pro residues). Composition is skewed to low complexity over residues 509-536 (AAPS…TTTL) and 544-564 (QPPQ…QPTP). The interval 554-584 (SPLLPQQQPTPSAAPAPSPLLPQQQPPPSAA) is interaction with inner tegument protein. The span at 565–609 (SAAPAPSPLLPQQQPPPSAARAPSPLPPQQQPLPSATPAPPPAQQ) shows a compositional bias: pro residues. A compositionally biased stretch (low complexity) spans 1143–1155 (APISPASPSATPA). The span at 2592 to 2603 (SADNTPASSDRL) shows a compositional bias: polar residues. The span at 2711–2720 (QPAPQQPPSS) shows a compositional bias: pro residues. Composition is skewed to polar residues over residues 2734-2745 (SPHSTPSTASGS) and 2784-2804 (SAAS…SSQD). Basic and acidic residues predominate over residues 2812–2827 (MQREKKQQGGREEAAE). Positions 2874–2885 (APALGSGLAAPA) are enriched in low complexity.

The protein belongs to the herpesviridae large tegument protein family. Interacts with host CUL1 and CUL4A; these interactions inhibit the E3 ligase activity of cullins. Interacts with inner tegument protein. Interacts with capsid vertex specific component CVC2. Interacts with the major capsid protein/MCP. Interacts with host TRIM25 and YWHAZ.

The protein resides in the virion tegument. It is found in the host cytoplasm. The protein localises to the host nucleus. It catalyses the reaction Thiol-dependent hydrolysis of ester, thioester, amide, peptide and isopeptide bonds formed by the C-terminal Gly of ubiquitin (a 76-residue protein attached to proteins as an intracellular targeting signal).. Its function is as follows. Large tegument protein that plays multiple roles in the viral cycle. During viral entry, remains associated with the capsid while most of the tegument is detached and participates in the capsid transport toward the host nucleus. Plays a role in the routing of the capsid at the nuclear pore complex and subsequent uncoating. Within the host nucleus, acts as a deneddylase and promotes the degradation of nuclear CRLs (cullin-RING ubiquitin ligases) and thereby stabilizes nuclear CRL substrates, while cytoplasmic CRLs remain unaffected. These modifications prevent host cell cycle S-phase progression and create a favorable environment allowing efficient viral genome replication. Participates later in the secondary envelopment of capsids. Indeed, plays a linker role for the association of the outer viral tegument to the capsids together with the inner tegument protein. Counteracts host TLR-mediated NF-kappa-B activation through both MYD88 and TICAM1-dependent pathways by interfering with 'Lys-63'- and 'Lys-48'-linked ubiquitination of signaling intermediates such as TRAF6 and IKBKG. Inhibits type I interferon production by forming a tri-molecular complex with host TRIM25 and 14-3-3 thereby promoting TRIM25 autoubiquitination and sequestration of the ligase into inactive protein aggregates. In turn, host RIGI is recruited to the complex but ubiquitination is severely impaired leading to inhibition of the pathway. Also catalyzes the removal of 'Lys-48'- and 'Lys-63'-linked ubiquitin chains on host TBK1 and STING1 suppressing cGAS-STING signaling in addition to the RIGI-MAVS pathway. Inhibits selective autophagy by deubiquitinating host SQSTM1. In turn, decreased SQSTM1 ubiquitination fails to recruit LC3 to SQSTM1-positive aggregates. In the host nucleus, deubiquitinates topoisomerase II subunits TOP2A and TOP2B thereby stabilizing SUMOylated TOP2 which halts the DNA damage response to TOP2-induced double strand DNA breaks and promotes cell survival. This Epstein-Barr virus (strain B95-8) (HHV-4) protein is Large tegument protein deneddylase.